The sequence spans 319 residues: Putative peptide permease protein BOV_A0351 (319 aa).

A run of 6 helical transmembrane segments spans residues 9-29 (LLIG…LLQL), 102-122 (LLLM…TGII), 138-158 (LALL…LYVF), 182-202 (LLRH…ALIM), 242-262 (LPVV…AIFI), and 284-304 (YPVI…VNIL). Positions 98 to 305 (IGPTLLLMAA…ACVIIVNILT (208 aa)) constitute an ABC transmembrane type-1 domain.

It belongs to the binding-protein-dependent transport system permease family. The complex is composed of two ATP-binding proteins (BOV_A0347 and BOV_A0348), two transmembrane proteins (BOV_A0350 and BOV_A0351) and a solute-binding protein (BOV_A0352).

The protein resides in the cell inner membrane. Probably part of an ABC transporter complex that could be involved in peptide import. Probably responsible for the translocation of the substrate across the membrane. In Brucella ovis (strain ATCC 25840 / 63/290 / NCTC 10512), this protein is Putative peptide permease protein BOV_A0351.